The chain runs to 200 residues: DNA dC-&gt;dU-editing enzyme APOBEC-3H (200 aa).

Positions 4–126 constitute a CMP/dCMP-type deaminase domain; sequence LTAETFRLQF…KPQQKGLRLL (123 aa). Position 54 (His54) interacts with Zn(2+). Residue Glu56 is the Proton donor of the active site. Positions 85 and 88 each coordinate Zn(2+). The stretch at 160 to 182 forms a coiled coil; it reads YKMLEELDKNSRAIKRRLERIKI.

This sequence belongs to the cytidine and deoxycytidylate deaminase family. As to quaternary structure, homodimer. Interacts with AGO1, AGO2 and AGO3. It depends on Zn(2+) as a cofactor. (Microbial infection) Following infection by some HIV-1 strains, such as isolate BRU/LAI, can be ubiquitinated by a cullin-5-RING E3 ubiquitin-protein ligase complex (ECS complex) hijacked by the HIV-1 Vif protein, leading to its degradation. Ubiquitination by the ECS complex is however less efficent compared to APOBEC3G or APOBEC3G. As to expression, expressed in lymphoid organs. Also detected in non-lymphoid tissues including lung, testis, ovary, fetal liver and skin.

Its subcellular location is the cytoplasm. It is found in the nucleus. It localises to the P-body. The catalysed reaction is a 2'-deoxycytidine in single-stranded DNA + H2O + H(+) = a 2'-deoxyuridine in single-stranded DNA + NH4(+). With respect to regulation, APOBEC3H activity is regulated by RNA. While RNA-binding inhibits the DNA deaminase activity, double-stranded RNA is required for HIV-1 restriction by promoting APOBEC3H homodimerization and packaging into retroviral nucleocapsids. (Microbial infection) Antiviral activity is inhibited to some extent by the HIV-1 virion infectivity factor (VIF), that prevents its incorporation into progeny virions by both inhibiting its translation and/or by inducing its ubiquitination and subsequent degradation by the 26S proteasome. Functionally, DNA deaminase (cytidine deaminase) which acts as an inhibitor of retrovirus replication and retrotransposon mobility via deaminase-dependent and -independent mechanisms. The A3H-var/haplotype 2 exhibits antiviral activity against vif-deficient HIV-1. After the penetration of retroviral nucleocapsids into target cells of infection and the initiation of reverse transcription, it can induce the conversion of cytosine to uracil in the minus-sense single-strand viral DNA, leading to G-to-A hypermutations in the subsequent plus-strand viral DNA. The resultant detrimental levels of mutations in the proviral genome, along with a deamination-independent mechanism that works prior to the proviral integration, together exert efficient antiretroviral effects in infected target cells. Selectively targets single-stranded DNA and does not deaminate double-stranded DNA or single- or double-stranded RNA. Exhibits antiviral activity also against T-cell leukemia virus type 1 (HTLV-1) and may inhibit the mobility of LTR and non-LTR retrotransposons. This Homo sapiens (Human) protein is DNA dC-&gt;dU-editing enzyme APOBEC-3H.